The following is a 178-amino-acid chain: Ribosome maturation factor RimM (178 aa).

Residues 99 to 178 form the PRC barrel domain; sequence EGDFYWHDLI…TIEVDWDAGF (80 aa).

It belongs to the RimM family. Binds ribosomal protein uS19.

It localises to the cytoplasm. Its function is as follows. An accessory protein needed during the final step in the assembly of 30S ribosomal subunit, possibly for assembly of the head region. Essential for efficient processing of 16S rRNA. May be needed both before and after RbfA during the maturation of 16S rRNA. It has affinity for free ribosomal 30S subunits but not for 70S ribosomes. The protein is Ribosome maturation factor RimM of Mannheimia succiniciproducens (strain KCTC 0769BP / MBEL55E).